Here is a 142-residue protein sequence, read N- to C-terminus: Small ribosomal subunit protein uS12 (142 aa).

This sequence belongs to the universal ribosomal protein uS12 family. In terms of assembly, part of the 30S ribosomal subunit.

With S4 and S5 plays an important role in translational accuracy. Located at the interface of the 30S and 50S subunits. The protein is Small ribosomal subunit protein uS12 of Methanoregula boonei (strain DSM 21154 / JCM 14090 / 6A8).